We begin with the raw amino-acid sequence, 96 residues long: Small ribosomal subunit protein bS6 (96 aa).

The protein belongs to the bacterial ribosomal protein bS6 family.

Its function is as follows. Binds together with bS18 to 16S ribosomal RNA. This is Small ribosomal subunit protein bS6 from Bacillus cereus (strain G9842).